The primary structure comprises 387 residues: Queuine tRNA-ribosyltransferase (387 aa).

Catalysis depends on Asp105, which acts as the Proton acceptor. Substrate contacts are provided by residues 105–109 (DSGGF), Asp177, and Gly248. Residues 278–284 (GIGDLPS) are RNA binding. Asp297 functions as the Nucleophile in the catalytic mechanism. An RNA binding; important for wobble base 34 recognition region spans residues 302–306 (TRAAR). Residues Cys335, Cys337, Cys340, and His366 each coordinate Zn(2+).

It belongs to the queuine tRNA-ribosyltransferase family. As to quaternary structure, homodimer. Within each dimer, one monomer is responsible for RNA recognition and catalysis, while the other monomer binds to the replacement base PreQ1. Zn(2+) serves as cofactor.

The enzyme catalyses 7-aminomethyl-7-carbaguanine + guanosine(34) in tRNA = 7-aminomethyl-7-carbaguanosine(34) in tRNA + guanine. Its pathway is tRNA modification; tRNA-queuosine biosynthesis. Functionally, catalyzes the base-exchange of a guanine (G) residue with the queuine precursor 7-aminomethyl-7-deazaguanine (PreQ1) at position 34 (anticodon wobble position) in tRNAs with GU(N) anticodons (tRNA-Asp, -Asn, -His and -Tyr). Catalysis occurs through a double-displacement mechanism. The nucleophile active site attacks the C1' of nucleotide 34 to detach the guanine base from the RNA, forming a covalent enzyme-RNA intermediate. The proton acceptor active site deprotonates the incoming PreQ1, allowing a nucleophilic attack on the C1' of the ribose to form the product. After dissociation, two additional enzymatic reactions on the tRNA convert PreQ1 to queuine (Q), resulting in the hypermodified nucleoside queuosine (7-(((4,5-cis-dihydroxy-2-cyclopenten-1-yl)amino)methyl)-7-deazaguanosine). This chain is Queuine tRNA-ribosyltransferase, found in Protochlamydia amoebophila (strain UWE25).